The sequence spans 542 residues: Apolipoprotein N-acyltransferase (542 aa).

A run of 6 helical transmembrane segments spans residues 24-44, 54-74, 85-105, 116-136, 160-180, and 190-210; these read VVAS…GLFA, VWCI…SWML, FVWG…SCLV, ALVW…YGLL, FFGW…CFAV, and GLWL…YEYL. The region spanning 220–499 is the CN hydrolase domain; that stretch reads LRVAIVQPGY…TGVLQVSVPL (280 aa). Glutamate 264 acts as the Proton acceptor in catalysis. Residue lysine 349 is part of the active site. Cysteine 404 (nucleophile) is an active-site residue. The chain crosses the membrane as a helical span at residues 509-529; it reads LGDAPLLLIAVCSVIGAIAYF.

Belongs to the CN hydrolase family. Apolipoprotein N-acyltransferase subfamily.

It localises to the cell inner membrane. The catalysed reaction is N-terminal S-1,2-diacyl-sn-glyceryl-L-cysteinyl-[lipoprotein] + a glycerophospholipid = N-acyl-S-1,2-diacyl-sn-glyceryl-L-cysteinyl-[lipoprotein] + a 2-acyl-sn-glycero-3-phospholipid + H(+). It participates in protein modification; lipoprotein biosynthesis (N-acyl transfer). In terms of biological role, catalyzes the phospholipid dependent N-acylation of the N-terminal cysteine of apolipoprotein, the last step in lipoprotein maturation. The protein is Apolipoprotein N-acyltransferase of Chlamydia trachomatis serovar D (strain ATCC VR-885 / DSM 19411 / UW-3/Cx).